Here is a 1644-residue protein sequence, read N- to C-terminus: Terminal uridylyltransferase 4 (1644 aa).

Disordered stretches follow at residues 31–63 (NQTL…QNDI), 96–168 (CKAK…SLLL), and 205–257 (ALQN…EMDY). The segment covering 36-46 (ARNDKSVKEIE) has biased composition (basic and acidic residues). Ser104 carries the phosphoserine modification. A compositionally biased stretch (polar residues) spans 112 to 125 (TISQAKSEKATSLQ). Phosphoserine is present on residues Ser134 and Ser156. Over residues 206 to 222 (LQNSPRSQKQQTCTDNT) the composition is skewed to polar residues. A compositionally biased stretch (basic and acidic residues) spans 238–252 (DLSKMKNDESNKENS). Residues 253-333 (SEMDYLENAT…KEKRHKKNIL (81 aa)) form a required for interaction with LIN28A and pre-let-7 RNA region. Zn(2+)-binding residues include Cys306, Cys309, His322, and His328. The tract at residues 579–617 (EKNSIAEENKAKADQPKDDTKKTETDNQSNAMKEKHGKS) is disordered. A compositionally biased stretch (basic and acidic residues) spans 582–603 (SIAEENKAKADQPKDDTKKTET). The PAP-associated 1 domain maps to 628 to 678 (SLGQLWLELLKFYTLDFALEEYVICVRIQDILTRENKNWPKRRIAIEDPFS). The disordered stretch occupies residues 794–816 (GQDSSSLSTSKSSEIEPKLDKKQ). Basic and acidic residues predominate over residues 806–816 (SEIEPKLDKKQ). Residues 901–1634 (DKFILTSGKP…CATRRCRERC (734 aa)) are sufficient for monouridylation activity. Residues 913–930 (IVCSICKKDGHSKNDCPE) form a CCHC-type 1 zinc finger. Residues 998 to 1001 (SSKN), 1008 to 1011 (SDLD), Asn1081, Lys1103, 1121 to 1125 (SYAYI), and His1237 contribute to the UTP site. Mg(2+)-binding residues include Asp1009 and Asp1011. The region spanning 1184–1237 (SLGELWLGLLRFYTEEFDFKEYVISIRQKKLLTTFEKQWTSKCIAIEDPFDLNH) is the PAP-associated 2 domain. Residues 1293–1310 (RCCRVCGKIGHYMKDCPK) form a CCHC-type 2 zinc finger. The segment at 1321–1348 (KDSEEEKEGNEEEKDSRDVLDPRDLHDT) is disordered. Residues 1334–1348 (KDSRDVLDPRDLHDT) are compositionally biased toward basic and acidic residues. A CCHC-type 3 zinc finger spans residues 1357–1374 (LRCFICGDAGHVRRECPE). Low complexity predominate over residues 1401–1426 (AGSAQQQGDQSIRTRQSSECSESPSY). Residues 1401-1482 (AGSAQQQGDQ…LYNFPQSPPA (82 aa)) are disordered. The span at 1441-1452 (AAITQPSSQPGS) shows a compositional bias: polar residues. Over residues 1453 to 1470 (QPKLGPPQQGAQPPHQVQ) the composition is skewed to low complexity. The residue at position 1624 (Arg1624) is an Omega-N-methylarginine.

The protein belongs to the DNA polymerase type-B-like family. Interacts with LIN28A in the presence of pre-let-7 RNA. Interacts with T2BP. Interacts with MOV10; the interaction is RNA-dependent. The cofactor is Mg(2+). It depends on Mn(2+) as a cofactor.

The protein localises to the nucleus. It is found in the cytoplasm. Its subcellular location is the cytoplasmic ribonucleoprotein granule. The catalysed reaction is RNA(n) + UTP = RNA(n)-3'-uridine ribonucleotide + diphosphate. Its function is as follows. Uridylyltransferase that mediates the terminal uridylation of mRNAs with short (less than 25 nucleotides) poly(A) tails, hence facilitating global mRNA decay. Essential for both oocyte maturation and fertility. Through 3' terminal uridylation of mRNA, sculpts, with TUT7, the maternal transcriptome by eliminating transcripts during oocyte growth. Involved in microRNA (miRNA)-induced gene silencing through uridylation of deadenylated miRNA targets. Also functions as an integral regulator of microRNA biogenesis using 3 different uridylation mechanisms. Acts as a suppressor of miRNA biogenesis by mediating the terminal uridylation of some miRNA precursors, including that of let-7 (pre-let-7), miR107, miR-143 and miR-200c. Uridylated miRNAs are not processed by Dicer and undergo degradation. Degradation of pre-let-7 contributes to the maintenance of embryonic stem (ES) cell pluripotency. Also catalyzes the 3' uridylation of miR-26A, a miRNA that targets IL6 transcript. This abrogates the silencing of IL6 transcript, hence promoting cytokine expression. In the absence of LIN28A, TUT7 and TUT4 monouridylate group II pre-miRNAs, which includes most of pre-let7 members, that shapes an optimal 3' end overhang for efficient processing. Adds oligo-U tails to truncated pre-miRNAS with a 5' overhang which may promote rapid degradation of non-functional pre-miRNA species. May also suppress Toll-like receptor-induced NF-kappa-B activation via binding to T2BP. Does not play a role in replication-dependent histone mRNA degradation. Due to functional redundancy between TUT4 and TUT7, the identification of the specific role of each of these proteins is difficult. TUT4 and TUT7 restrict retrotransposition of long interspersed element-1 (LINE-1) in cooperation with MOV10 counteracting the RNA chaperonne activity of L1RE1. TUT7 uridylates LINE-1 mRNAs in the cytoplasm which inhibits initiation of reverse transcription once in the nucleus, whereas uridylation by TUT4 destabilizes mRNAs in cytoplasmic ribonucleoprotein granules. This chain is Terminal uridylyltransferase 4, found in Homo sapiens (Human).